The following is a 412-amino-acid chain: Probable serine/threonine-protein kinase PBL4 (412 aa).

Residue Gly2 is the site of N-myristoyl glycine attachment. Cys4 carries the S-palmitoyl cysteine lipid modification. The tract at residues 14 to 40 (RESPYRGSSRISAKRSQSSRLSSLTIQ) is disordered. The span at 21 to 40 (SSRISAKRSQSSRLSSLTIQ) shows a compositional bias: low complexity. The residue at position 72 (Thr72) is a Phosphothreonine. The Protein kinase domain maps to 83-369 (FRPDSVIGEG…STLEELEMTL (287 aa)). ATP-binding positions include 89-97 (IGEGGFGYV) and Lys121. Tyr167 carries the phosphotyrosine modification. Asp215 serves as the catalytic Proton acceptor. A phosphoserine mark is found at Ser219 and Ser249. Thr250 and Thr255 each carry phosphothreonine. Tyr263 is modified (phosphotyrosine).

Belongs to the protein kinase superfamily. Ser/Thr protein kinase family.

It localises to the cell membrane. It catalyses the reaction L-seryl-[protein] + ATP = O-phospho-L-seryl-[protein] + ADP + H(+). It carries out the reaction L-threonyl-[protein] + ATP = O-phospho-L-threonyl-[protein] + ADP + H(+). Functionally, may be involved in plant defense signaling. This chain is Probable serine/threonine-protein kinase PBL4, found in Arabidopsis thaliana (Mouse-ear cress).